We begin with the raw amino-acid sequence, 1738 residues long: Interaptin (1738 aa).

The actin-binding stretch occupies residues 1 to 248; sequence MEHSTPLNEE…TYISLFPKVY (248 aa). Residues 1 to 1705 are Cytoplasmic-facing; sequence MEHSTPLNEE…RIFPSKNTRP (1705 aa). Calponin-homology (CH) domains lie at 22-128 and 146-249; these read IAQK…LRYQ and TKPS…KVYQ. Disordered stretches follow at residues 285–350, 1068–1090, and 1589–1627; these read SKST…SNLS, IQQL…SEKD, and LQQQ…PNQI. Residues 292–301 are compositionally biased toward low complexity; sequence QQNQQQQQQN. Residues 302–316 are compositionally biased toward polar residues; it reads LLSPNSYRNSISFSK. 3 stretches are compositionally biased toward low complexity: residues 317–344, 1068–1086, and 1589–1617; these read SPSF…NSTT, IQQL…SNQL, and LQQQ…SSTP. Residues 373-1598 adopt a coiled-coil conformation; the sequence is EESRVIEKIV…LQQQKQQQQQ (1226 aa). The helical; Anchor for type IV membrane protein transmembrane segment at 1706–1726 threads the bilayer; it reads IFDWRALFFIGAAVLAISTLF.

Belongs to the alpha-actinin family.

The protein localises to the nucleus membrane. Its subcellular location is the endoplasmic reticulum membrane. The protein resides in the golgi apparatus. It localises to the golgi stack membrane. It is found in the cytoplasm. The protein localises to the cytoskeleton. Its subcellular location is the microtubule organizing center. The protein resides in the centrosome. In terms of biological role, may function as linker between cellular membranes and the actin cytoskeleton. Required for normal development of fruiting bodies. This chain is Interaptin (abpD), found in Dictyostelium discoideum (Social amoeba).